Consider the following 506-residue polypeptide: Cytochrome P450 6a2 (506 aa).

Cys451 is a heme binding site.

It belongs to the cytochrome P450 family. Requires heme as cofactor.

The protein resides in the endoplasmic reticulum membrane. Its subcellular location is the microsome membrane. In terms of biological role, is involved in the breakdown of synthetic insecticides and may be involved in the metabolism of insect hormones. This chain is Cytochrome P450 6a2 (Cyp6a2), found in Drosophila melanogaster (Fruit fly).